Here is a 365-residue protein sequence, read N- to C-terminus: UDP-N-acetylglucosamine--N-acetylmuramyl-(pentapeptide) pyrophosphoryl-undecaprenol N-acetylglucosamine transferase (365 aa).

Residues 10–12 (TGG), asparagine 128, arginine 170, serine 199, isoleucine 250, and glutamine 295 each bind UDP-N-acetyl-alpha-D-glucosamine.

The protein belongs to the glycosyltransferase 28 family. MurG subfamily.

Its subcellular location is the cell inner membrane. It carries out the reaction di-trans,octa-cis-undecaprenyl diphospho-N-acetyl-alpha-D-muramoyl-L-alanyl-D-glutamyl-meso-2,6-diaminopimeloyl-D-alanyl-D-alanine + UDP-N-acetyl-alpha-D-glucosamine = di-trans,octa-cis-undecaprenyl diphospho-[N-acetyl-alpha-D-glucosaminyl-(1-&gt;4)]-N-acetyl-alpha-D-muramoyl-L-alanyl-D-glutamyl-meso-2,6-diaminopimeloyl-D-alanyl-D-alanine + UDP + H(+). The protein operates within cell wall biogenesis; peptidoglycan biosynthesis. In terms of biological role, cell wall formation. Catalyzes the transfer of a GlcNAc subunit on undecaprenyl-pyrophosphoryl-MurNAc-pentapeptide (lipid intermediate I) to form undecaprenyl-pyrophosphoryl-MurNAc-(pentapeptide)GlcNAc (lipid intermediate II). The protein is UDP-N-acetylglucosamine--N-acetylmuramyl-(pentapeptide) pyrophosphoryl-undecaprenol N-acetylglucosamine transferase of Pelodictyon phaeoclathratiforme (strain DSM 5477 / BU-1).